A 568-amino-acid chain; its full sequence is Mannitol 2-dehydrogenase (568 aa).

Ile109–Ala120 serves as a coordination point for NAD(+).

This sequence belongs to the mannitol dehydrogenase family. In terms of assembly, monomer.

The catalysed reaction is D-mannitol + NAD(+) = D-fructose + NADH + H(+). Functionally, catalyzes the NAD(H)-dependent interconversion of D-fructose and D-mannitol in the mannitol metabolic pathway. This is Mannitol 2-dehydrogenase from Phaeosphaeria nodorum (strain SN15 / ATCC MYA-4574 / FGSC 10173) (Glume blotch fungus).